A 51-amino-acid polypeptide reads, in one-letter code: Small ribosomal subunit protein uS13 (51 aa).

The protein belongs to the universal ribosomal protein uS13 family. As to quaternary structure, part of the 30S ribosomal subunit. Forms a loose heterodimer with protein S19. Forms two bridges to the 50S subunit in the 70S ribosome.

Functionally, located at the top of the head of the 30S subunit, it contacts several helices of the 16S rRNA. In the 70S ribosome it contacts the 23S rRNA (bridge B1a) and protein L5 of the 50S subunit (bridge B1b), connecting the 2 subunits; these bridges are implicated in subunit movement. Contacts the tRNAs in the A and P-sites. This chain is Small ribosomal subunit protein uS13 (rpsM), found in Lactococcus lactis subsp. cremoris (Streptococcus cremoris).